A 249-amino-acid chain; its full sequence is 3-deoxy-manno-octulosonate cytidylyltransferase (249 aa).

Belongs to the KdsB family.

The protein resides in the cytoplasm. The catalysed reaction is 3-deoxy-alpha-D-manno-oct-2-ulosonate + CTP = CMP-3-deoxy-beta-D-manno-octulosonate + diphosphate. It functions in the pathway nucleotide-sugar biosynthesis; CMP-3-deoxy-D-manno-octulosonate biosynthesis; CMP-3-deoxy-D-manno-octulosonate from 3-deoxy-D-manno-octulosonate and CTP: step 1/1. It participates in bacterial outer membrane biogenesis; lipopolysaccharide biosynthesis. Functionally, activates KDO (a required 8-carbon sugar) for incorporation into bacterial lipopolysaccharide in Gram-negative bacteria. This is 3-deoxy-manno-octulosonate cytidylyltransferase from Aliivibrio fischeri (strain ATCC 700601 / ES114) (Vibrio fischeri).